Consider the following 675-residue polypeptide: Heat shock 70 kDa protein 12A (675 aa).

Residues Met1–Arg13 are compositionally biased toward basic and acidic residues. A disordered region spans residues Met1–Thr45. An N-acetylalanine modification is found at Ala2. Polar residues-rich tracts occupy residues Ala16–Ala25 and Thr34–Thr45.

Belongs to the heat shock protein 70 family. As to quaternary structure, interacts with SORL1 (via cytosolic C-terminus); this interaction affects SORL1 internalization and subcellular localization. In terms of tissue distribution, widely expressed with highest levels in brain, kidney and muscle.

The protein resides in the cytoplasm. It is found in the nucleus. Adapter protein for SORL1, but not SORT1. Delays SORL1 internalization and affects SORL1 subcellular localization. This chain is Heat shock 70 kDa protein 12A (HSPA12A), found in Homo sapiens (Human).